Consider the following 588-residue polypeptide: Pectinesterase 4 (588 aa).

Positions 1 to 24 (MIGKVVVSVASILLIVGVAIGVVA) are cleaved as a signal peptide. Asn-86, Asn-206, and Asn-342 each carry an N-linked (GlcNAc...) asparagine glycan. Substrate-binding residues include Thr-353 and Gln-383. Asp-406 functions as the Proton donor in the catalytic mechanism. Asp-427 acts as the Nucleophile in catalysis. Residues Arg-496 and Trp-498 each contribute to the substrate site.

In the N-terminal section; belongs to the PMEI family. This sequence in the C-terminal section; belongs to the pectinesterase family. Expressed in pollen grains and pollen tubes.

Its subcellular location is the secreted. It is found in the cell wall. The enzyme catalyses [(1-&gt;4)-alpha-D-galacturonosyl methyl ester](n) + n H2O = [(1-&gt;4)-alpha-D-galacturonosyl](n) + n methanol + n H(+). Its pathway is glycan metabolism; pectin degradation; 2-dehydro-3-deoxy-D-gluconate from pectin: step 1/5. Acts in the modification of cell walls via demethylesterification of cell wall pectin. Plays an important role in growth of pollen tubes in female floral tissues, possibly via enhancing the interaction between the pollen tube and female floral tissues by modification of the cell walls. This is Pectinesterase 4 (PME4) from Arabidopsis thaliana (Mouse-ear cress).